The sequence spans 132 residues: Female-specific protein 800 (132 aa).

In terms of biological role, FS800 is likely to have some function in the production or maintenance of the schistosome egg. It may have a function unrelated to eggshell formation. The chain is Female-specific protein 800 from Schistosoma mansoni (Blood fluke).